The sequence spans 124 residues: Large ribosomal subunit protein bL12 (124 aa).

Residues 93–124 (GAPSTVKEGASKDEAEEAKKKLEEAGASVELK) are disordered. The span at 101-116 (GASKDEAEEAKKKLEE) shows a compositional bias: basic and acidic residues.

The protein belongs to the bacterial ribosomal protein bL12 family. Homodimer. Part of the ribosomal stalk of the 50S ribosomal subunit. Forms a multimeric L10(L12)X complex, where L10 forms an elongated spine to which 2 to 4 L12 dimers bind in a sequential fashion. Binds GTP-bound translation factors.

Its function is as follows. Forms part of the ribosomal stalk which helps the ribosome interact with GTP-bound translation factors. Is thus essential for accurate translation. The polypeptide is Large ribosomal subunit protein bL12 (Marinobacter nauticus (strain ATCC 700491 / DSM 11845 / VT8) (Marinobacter aquaeolei)).